A 202-amino-acid polypeptide reads, in one-letter code: uncharacterized protein (202 aa).

The 61-residue stretch at 13 to 73 (ELAADRILDA…AYVHRETRRL (61 aa)) folds into the HTH tetR-type domain. The H-T-H motif DNA-binding region spans 36-55 (GMNEIAKAAGCSRATLYRYF).

This is an uncharacterized protein from Mycobacterium tuberculosis (strain CDC 1551 / Oshkosh).